A 439-amino-acid polypeptide reads, in one-letter code: Casein kinase I homolog 3 (439 aa).

The 272-residue stretch at 15 to 286 (YRVGKKIGEG…LRSLFDSLLL (272 aa)) folds into the Protein kinase domain. Residues 21 to 29 (IGEGSFGML) and lysine 44 contribute to the ATP site. Aspartate 134 acts as the Proton acceptor in catalysis. Residues 366–426 (DGIPGKAASP…PSKEKSRKKF (61 aa)) form a disordered region. Residues 372-413 (AASPQVQQQQQTSSAQQQQPQRVEQPAPQTTQPTQVDTQQAA) are compositionally biased toward low complexity.

The protein belongs to the protein kinase superfamily. CK1 Ser/Thr protein kinase family. Casein kinase I subfamily.

It localises to the cytoplasm. The catalysed reaction is L-seryl-[protein] + ATP = O-phospho-L-seryl-[protein] + ADP + H(+). It catalyses the reaction L-threonyl-[protein] + ATP = O-phospho-L-threonyl-[protein] + ADP + H(+). In terms of biological role, casein kinases are operationally defined by their preferential utilization of acidic proteins such as caseins as substrates. In Schizosaccharomyces pombe (strain 972 / ATCC 24843) (Fission yeast), this protein is Casein kinase I homolog 3 (cki3).